A 102-amino-acid polypeptide reads, in one-letter code: Protein ORF28 (102 aa).

Residues 28 to 48 (VIGLITVLFLLVIGACVYCCI) traverse the membrane as a helical segment.

Its subcellular location is the host membrane. This chain is Protein ORF28 (ORF28), found in Homo sapiens (Human).